A 598-amino-acid polypeptide reads, in one-letter code: Elongation factor 4 (598 aa).

The tr-type G domain occupies 2 to 184; that stretch reads KNIRNFSIIA…EIVHKIPAPE (183 aa). GTP-binding positions include 14–19 and 131–134; these read DHGKST and NKID.

The protein belongs to the TRAFAC class translation factor GTPase superfamily. Classic translation factor GTPase family. LepA subfamily.

The protein localises to the cell inner membrane. It catalyses the reaction GTP + H2O = GDP + phosphate + H(+). Its function is as follows. Required for accurate and efficient protein synthesis under certain stress conditions. May act as a fidelity factor of the translation reaction, by catalyzing a one-codon backward translocation of tRNAs on improperly translocated ribosomes. Back-translocation proceeds from a post-translocation (POST) complex to a pre-translocation (PRE) complex, thus giving elongation factor G a second chance to translocate the tRNAs correctly. Binds to ribosomes in a GTP-dependent manner. In Pasteurella multocida (strain Pm70), this protein is Elongation factor 4.